A 121-amino-acid chain; its full sequence is Small ribosomal subunit protein uS13 (121 aa).

The disordered stretch occupies residues 88-121 (GMRHRRGLPVRGQHTKNNARTRKGKAVAIANKKK).

It belongs to the universal ribosomal protein uS13 family. Part of the 30S ribosomal subunit. Forms a loose heterodimer with protein S19. Forms two bridges to the 50S subunit in the 70S ribosome.

In terms of biological role, located at the top of the head of the 30S subunit, it contacts several helices of the 16S rRNA. In the 70S ribosome it contacts the 23S rRNA (bridge B1a) and protein L5 of the 50S subunit (bridge B1b), connecting the 2 subunits; these bridges are implicated in subunit movement. Contacts the tRNAs in the A and P-sites. The protein is Small ribosomal subunit protein uS13 of Limosilactobacillus reuteri subsp. reuteri (strain JCM 1112) (Lactobacillus reuteri).